A 115-amino-acid chain; its full sequence is Toxin-like structure LSTX-D2 (115 aa).

Positions 1–22 (MKVLVLFSVLFLTLFSYSSTEA) are cleaved as a signal peptide. A propeptide spanning residues 23–44 (IDEFDSDAEDDMLSLMANEQVR) is cleaved from the precursor. 4 disulfide bridges follow: Cys48/Cys63, Cys55/Cys72, Cys62/Cys87, and Cys74/Cys85.

The protein belongs to the neurotoxin 19 (CSTX) family. 01 subfamily. Expressed by the venom gland.

The protein localises to the secreted. The polypeptide is Toxin-like structure LSTX-D2 (Lycosa singoriensis (Wolf spider)).